The following is a 341-amino-acid chain: L-threonine 3-dehydrogenase (341 aa).

C38 provides a ligand contact to Zn(2+). Residues T40 and H43 each act as charge relay system in the active site. Residues H63, E64, C93, C96, C99, and C107 each coordinate Zn(2+). NAD(+) is bound by residues I175, D195, R200, 262–264, and 286–287; these read LGI and IY.

The protein belongs to the zinc-containing alcohol dehydrogenase family. Homotetramer. The cofactor is Zn(2+).

Its subcellular location is the cytoplasm. The enzyme catalyses L-threonine + NAD(+) = (2S)-2-amino-3-oxobutanoate + NADH + H(+). The protein operates within amino-acid degradation; L-threonine degradation via oxydo-reductase pathway; glycine from L-threonine: step 1/2. Its function is as follows. Catalyzes the NAD(+)-dependent oxidation of L-threonine to 2-amino-3-ketobutyrate. In Escherichia coli O157:H7, this protein is L-threonine 3-dehydrogenase.